Reading from the N-terminus, the 428-residue chain is MDKISQLHDELLLGILSLLPNAKDVVATMVLSKRWRYLWMMVPSLVYDDSYQDIDYGRFSRFVDRSLALHKAPVIDTLHFKLGHICGSGDTLIGAAEKCCVRKLIIKIDDTSSRSSKTDQVILPMSLCSGVHIMLADLKLQNVVLVDVSTPVSFPSLKRLRLKSVKYPGNEFVNNLISSCPVLEDLVVKQCSDDNVTILTVRVPSLKRLSLIQRAELEIDVPHDFVIDTPSLEHLKIVDYTYGSRVVKSTMNRIITASMDVFSPQTKEILGSLTSTKRLFLCLPTSKDAYPVGNIFGSLIHLTICTCETEWLNVLIRVLRDSPNLKTLKIEQYHNLRDEDPRPCWNETSLVPEYLLPSLETFEWVDYEGTKTEKQVVAFILRIASCLKQATIVSFKYIDHDKKLEMLNDFPVSSRRSPACMLAFSWNL.

The F-box domain maps to 2–50 (DKISQLHDELLLGILSLLPNAKDVVATMVLSKRWRYLWMMVPSLVYDDS). The FBD domain occupies 344 to 394 (CWNETSLVPEYLLPSLETFEWVDYEGTKTEKQVVAFILRIASCLKQATIVS).

The polypeptide is Putative FBD-associated F-box protein At5g56390 (Arabidopsis thaliana (Mouse-ear cress)).